Consider the following 62-residue polypeptide: Conotoxin Tx5.1 (62 aa).

Positions 1 to 22 (MCCLPVFVILLLLIASAPSVDA) are cleaved as a signal peptide. The propeptide occupies 23–49 (QPKTKDDVPLAPLHDNAKSALQHLNQR). The residue at position 60 (Gln60) is a Glutamine amide.

It belongs to the conotoxin T superfamily. Contains 2 disulfide bonds that can be either 'C1-C3, C2-C4' or 'C1-C4, C2-C3', since these disulfide connectivities have been observed for conotoxins with cysteine framework V (for examples, see AC P0DQQ7 and AC P81755). In terms of tissue distribution, expressed by the venom duct.

Its subcellular location is the secreted. This is Conotoxin Tx5.1 from Conus textile (Cloth-of-gold cone).